The following is a 260-amino-acid chain: Phosphate import ATP-binding protein PstB (260 aa).

An ABC transporter domain is found at 13–255; it reads MRAQGVNVFY…PKQERTKDYI (243 aa). 45–52 is a binding site for ATP; the sequence is GPSGCGKS.

It belongs to the ABC transporter superfamily. Phosphate importer (TC 3.A.1.7) family. The complex is composed of two ATP-binding proteins (PstB), two transmembrane proteins (PstC and PstA) and a solute-binding protein (PstS).

It is found in the cell inner membrane. The catalysed reaction is phosphate(out) + ATP + H2O = ADP + 2 phosphate(in) + H(+). Its function is as follows. Part of the ABC transporter complex PstSACB involved in phosphate import. Responsible for energy coupling to the transport system. This is Phosphate import ATP-binding protein PstB from Sphingopyxis alaskensis (strain DSM 13593 / LMG 18877 / RB2256) (Sphingomonas alaskensis).